The primary structure comprises 363 residues: Trans-2,3-enoyl-CoA reductase-like (363 aa).

The residue at position 37 (S37) is a Phosphoserine. 4 consecutive transmembrane segments (helical) span residues W143–L163, N216–I235, V250–V270, and I311–I331.

It belongs to the steroid 5-alpha reductase family.

It localises to the membrane. The protein resides in the endoplasmic reticulum. In Bos taurus (Bovine), this protein is Trans-2,3-enoyl-CoA reductase-like (TECRL).